We begin with the raw amino-acid sequence, 148 residues long: Deoxyuridine 5'-triphosphate nucleotidohydrolase (148 aa).

Residues 68–70, asparagine 81, and 85–87 contribute to the substrate site; these read RSG and TID.

Belongs to the dUTPase family. It depends on Mg(2+) as a cofactor.

It catalyses the reaction dUTP + H2O = dUMP + diphosphate + H(+). It participates in pyrimidine metabolism; dUMP biosynthesis; dUMP from dCTP (dUTP route): step 2/2. Functionally, this enzyme is involved in nucleotide metabolism: it produces dUMP, the immediate precursor of thymidine nucleotides and it decreases the intracellular concentration of dUTP so that uracil cannot be incorporated into DNA. The sequence is that of Deoxyuridine 5'-triphosphate nucleotidohydrolase from Geobacter metallireducens (strain ATCC 53774 / DSM 7210 / GS-15).